We begin with the raw amino-acid sequence, 295 residues long: Undecaprenyl-diphosphatase (295 aa).

7 consecutive transmembrane segments (helical) span residues 12–34, 50–70, 95–115, 120–140, 209–229, 243–263, and 272–292; these read IAIA…HAVV, FLPF…LYFW, IFML…LLEH, LFES…LLLF, AHFS…LEVP, TAAL…AFLM, and WALK…LAWL.

This sequence belongs to the UppP family.

Its subcellular location is the cell inner membrane. It carries out the reaction di-trans,octa-cis-undecaprenyl diphosphate + H2O = di-trans,octa-cis-undecaprenyl phosphate + phosphate + H(+). Functionally, catalyzes the dephosphorylation of undecaprenyl diphosphate (UPP). Confers resistance to bacitracin. This is Undecaprenyl-diphosphatase from Granulibacter bethesdensis (strain ATCC BAA-1260 / CGDNIH1).